The chain runs to 138 residues: Putative pre-16S rRNA nuclease (138 aa).

This sequence belongs to the YqgF nuclease family.

Its subcellular location is the cytoplasm. Its function is as follows. Could be a nuclease involved in processing of the 5'-end of pre-16S rRNA. The protein is Putative pre-16S rRNA nuclease of Haemophilus ducreyi (strain 35000HP / ATCC 700724).